Consider the following 363-residue polypeptide: Alanine racemase (363 aa).

Lysine 34 (proton acceptor; specific for D-alanine) is an active-site residue. An N6-(pyridoxal phosphate)lysine modification is found at lysine 34. Arginine 129 serves as a coordination point for substrate. Tyrosine 256 (proton acceptor; specific for L-alanine) is an active-site residue. Residue methionine 304 participates in substrate binding.

It belongs to the alanine racemase family. The cofactor is pyridoxal 5'-phosphate.

It carries out the reaction L-alanine = D-alanine. The protein operates within amino-acid biosynthesis; D-alanine biosynthesis; D-alanine from L-alanine: step 1/1. Catalyzes the interconversion of L-alanine and D-alanine. May also act on other amino acids. In Edwardsiella ictaluri (strain 93-146), this protein is Alanine racemase (alr).